Consider the following 138-residue polypeptide: Transposon Tn10 TetD protein (138 aa).

Positions 31–129 (KDVLLWIEHN…KVTPSYYRRN (99 aa)) constitute an HTH araC/xylS-type domain. 2 DNA-binding regions (H-T-H motif) span residues 48–69 (DDVA…KKVT) and 96–119 (ILEI…KYIF).

This is Transposon Tn10 TetD protein (tetD) from Escherichia coli.